We begin with the raw amino-acid sequence, 178 residues long: Alkyl hydroperoxide reductase AhpD (178 aa).

C130 serves as the catalytic Proton donor. Cysteines 130 and 133 form a disulfide. C133 acts as the Cysteine sulfenic acid (-SOH) intermediate in catalysis.

This sequence belongs to the AhpD family. In terms of assembly, homotrimer.

The enzyme catalyses N(6)-[(R)-dihydrolipoyl]-L-lysyl-[lipoyl-carrier protein] + a hydroperoxide = N(6)-[(R)-lipoyl]-L-lysyl-[lipoyl-carrier protein] + an alcohol + H2O. Its function is as follows. Antioxidant protein with alkyl hydroperoxidase activity. Required for the reduction of the AhpC active site cysteine residues and for the regeneration of the AhpC enzyme activity. This chain is Alkyl hydroperoxide reductase AhpD, found in Mycobacterium marinum (strain ATCC BAA-535 / M).